Consider the following 452-residue polypeptide: MNIVILAAGQGKRMHSNLPKVLHPIAGKPLAQHVIDTARQLSPEKLIVVYGHGGEVVRSTLAAPDLSWAEQAQQLGTGHAVAQALSELGSAAQTLVLYGDVPLTTVATLKRLLQAGKDALSVLTVDLANPSGYGRIVRDGAGNMISIVEEKDASAEQKAIREVNTGIMAVPTARLADWLGKLKNDNAQGEYYLTDIIALAVAEGMPVRTAQPEGEWEVLGVNSKVQLAELERQHQLNLAGELLVAGVRLADPARIDIRGELTHGRDVAIDVGCVFEGKVELADAVEVGPYCVLKNVKVGAGTRIAAFCHFEDAVIGPDGVLGPYARLRPGTELGPEVHIGNFVEVKKSIIGAQSKANHLAYIGDAEIGQRVNVGAGTITCNYDGANKFKTVIEDDVFIGSDTQLVAPVTVGRGATLGAGTTLTKDAPPDALTFSRPRQMTLPGWERPKKVKK.

Residues methionine 1–lysine 224 form a pyrophosphorylase region. UDP-N-acetyl-alpha-D-glucosamine-binding positions include leucine 6–glycine 9, lysine 20, glutamine 71, glycine 76–threonine 77, tyrosine 98–aspartate 100, glycine 134, glutamate 149, asparagine 164, and asparagine 222. A Mg(2+)-binding site is contributed by aspartate 100. Mg(2+) is bound at residue asparagine 222. The interval valine 225–alanine 245 is linker. Residues glycine 246–lysine 452 form an N-acetyltransferase region. Residues arginine 328 and lysine 346 each contribute to the UDP-N-acetyl-alpha-D-glucosamine site. The active-site Proton acceptor is histidine 358. Positions 361 and 372 each coordinate UDP-N-acetyl-alpha-D-glucosamine. Residues alanine 375, asparagine 381–tyrosine 382, serine 400, alanine 418, and arginine 435 contribute to the acetyl-CoA site.

The protein in the N-terminal section; belongs to the N-acetylglucosamine-1-phosphate uridyltransferase family. It in the C-terminal section; belongs to the transferase hexapeptide repeat family. As to quaternary structure, homotrimer. Mg(2+) is required as a cofactor.

The protein resides in the cytoplasm. It catalyses the reaction alpha-D-glucosamine 1-phosphate + acetyl-CoA = N-acetyl-alpha-D-glucosamine 1-phosphate + CoA + H(+). The enzyme catalyses N-acetyl-alpha-D-glucosamine 1-phosphate + UTP + H(+) = UDP-N-acetyl-alpha-D-glucosamine + diphosphate. Its pathway is nucleotide-sugar biosynthesis; UDP-N-acetyl-alpha-D-glucosamine biosynthesis; N-acetyl-alpha-D-glucosamine 1-phosphate from alpha-D-glucosamine 6-phosphate (route II): step 2/2. The protein operates within nucleotide-sugar biosynthesis; UDP-N-acetyl-alpha-D-glucosamine biosynthesis; UDP-N-acetyl-alpha-D-glucosamine from N-acetyl-alpha-D-glucosamine 1-phosphate: step 1/1. It participates in bacterial outer membrane biogenesis; LPS lipid A biosynthesis. In terms of biological role, catalyzes the last two sequential reactions in the de novo biosynthetic pathway for UDP-N-acetylglucosamine (UDP-GlcNAc). The C-terminal domain catalyzes the transfer of acetyl group from acetyl coenzyme A to glucosamine-1-phosphate (GlcN-1-P) to produce N-acetylglucosamine-1-phosphate (GlcNAc-1-P), which is converted into UDP-GlcNAc by the transfer of uridine 5-monophosphate (from uridine 5-triphosphate), a reaction catalyzed by the N-terminal domain. The protein is Bifunctional protein GlmU of Dechloromonas aromatica (strain RCB).